A 507-amino-acid chain; its full sequence is ATP synthase subunit alpha (507 aa).

ATP is bound at residue 168–175 (GDRKTGKT).

This sequence belongs to the ATPase alpha/beta chains family. F-type ATPases have 2 components, CF(1) - the catalytic core - and CF(0) - the membrane proton channel. CF(1) has five subunits: alpha(3), beta(3), gamma(1), delta(1), epsilon(1). CF(0) has three main subunits: a(1), b(2) and c(9-12). The alpha and beta chains form an alternating ring which encloses part of the gamma chain. CF(1) is attached to CF(0) by a central stalk formed by the gamma and epsilon chains, while a peripheral stalk is formed by the delta and b chains.

The protein localises to the cell inner membrane. It catalyses the reaction ATP + H2O + 4 H(+)(in) = ADP + phosphate + 5 H(+)(out). Functionally, produces ATP from ADP in the presence of a proton gradient across the membrane. The alpha chain is a regulatory subunit. The protein is ATP synthase subunit alpha of Ehrlichia ruminantium (strain Gardel).